We begin with the raw amino-acid sequence, 185 residues long: Ribosome-recycling factor (185 aa).

The protein belongs to the RRF family.

It localises to the cytoplasm. In terms of biological role, responsible for the release of ribosomes from messenger RNA at the termination of protein biosynthesis. May increase the efficiency of translation by recycling ribosomes from one round of translation to another. The protein is Ribosome-recycling factor of Aliivibrio fischeri (strain ATCC 700601 / ES114) (Vibrio fischeri).